A 234-amino-acid polypeptide reads, in one-letter code: MSKSFTFKQFHIDIGSCGMPVSTDGVLLGAWTNISECSQILDIGAGTGLLSLMSAQRNSNAHIDAIELMPIAAEVARLNFSQSPWKERLVLIHQDFLSYQTAYEYDAIICNPPYFNNGEQSLKGERSTARHTDSLPFDKLLQHCKTLISSTGRASFILPVFEGEIFIKIAKGCDFHLTKITKVKTTEKKSPTRLLIELSLFPHIYQESTLTIHDGNGYSDDFIKLTRMFYLNMG.

The protein belongs to the methyltransferase superfamily. tRNA (adenine-N(6)-)-methyltransferase family.

The protein localises to the cytoplasm. The catalysed reaction is adenosine(37) in tRNA1(Val) + S-adenosyl-L-methionine = N(6)-methyladenosine(37) in tRNA1(Val) + S-adenosyl-L-homocysteine + H(+). Specifically methylates the adenine in position 37 of tRNA(1)(Val) (anticodon cmo5UAC). The chain is tRNA1(Val) (adenine(37)-N6)-methyltransferase from Aliivibrio fischeri (strain MJ11) (Vibrio fischeri).